The primary structure comprises 322 residues: GTP 3',8-cyclase (322 aa).

Positions 5 to 233 (KYGRVVDYLR…NAPASIYRLD (229 aa)) constitute a Radical SAM core domain. Position 14 (arginine 14) interacts with GTP. 2 residues coordinate [4Fe-4S] cluster: cysteine 21 and cysteine 25. Tyrosine 27 serves as a coordination point for S-adenosyl-L-methionine. Residue cysteine 28 coordinates [4Fe-4S] cluster. Position 64 (arginine 64) interacts with GTP. Glycine 68 lines the S-adenosyl-L-methionine pocket. Threonine 95 contributes to the GTP binding site. Residue serine 119 coordinates S-adenosyl-L-methionine. Lysine 155 is a GTP binding site. Residue methionine 189 participates in S-adenosyl-L-methionine binding. [4Fe-4S] cluster-binding residues include cysteine 249 and cysteine 252. 254-256 (RIR) contacts GTP. Cysteine 266 contacts [4Fe-4S] cluster.

This sequence belongs to the radical SAM superfamily. MoaA family. As to quaternary structure, monomer and homodimer. It depends on [4Fe-4S] cluster as a cofactor.

It catalyses the reaction GTP + AH2 + S-adenosyl-L-methionine = (8S)-3',8-cyclo-7,8-dihydroguanosine 5'-triphosphate + 5'-deoxyadenosine + L-methionine + A + H(+). Its pathway is cofactor biosynthesis; molybdopterin biosynthesis. Functionally, catalyzes the cyclization of GTP to (8S)-3',8-cyclo-7,8-dihydroguanosine 5'-triphosphate. The protein is GTP 3',8-cyclase of Campylobacter curvus (strain 525.92).